We begin with the raw amino-acid sequence, 3942 residues long: Protein bassoon (3942 aa).

The disordered stretch occupies residues Met-1–Ile-158. A lipid anchor (N-myristoyl glycine) is attached at Gly-2. Gly residues predominate over residues Gly-9 to Ala-29. Residues Lys-31–Gly-52 are compositionally biased toward low complexity. A compositionally biased stretch (pro residues) spans Pro-53–Gly-71. Residues Pro-62–Gly-71 are 5 X 2 AA tandem repeats of P-G. 2 stretches are compositionally biased toward polar residues: residues Ser-85 to Ala-98 and Gln-127 to Ser-154. Position 142 is a phosphoserine (Ser-142). The residue at position 145 (Arg-145) is an Omega-N-methylarginine. 2 consecutive C4-type zinc fingers follow at residues Cys-167 to Cys-190 and Cys-195 to Cys-217. Disordered regions lie at residues Thr-228 to Gln-341 and Leu-362 to Pro-457. A compositionally biased stretch (polar residues) spans Ala-230–His-240. Phosphoserine occurs at positions 241 and 245. Residues Leu-362 to Lys-379 are compositionally biased toward polar residues. Residues Pro-395–Thr-407 are compositionally biased toward pro residues. 2 consecutive C4-type zinc fingers follow at residues Cys-464–Cys-487 and Cys-492–Cys-514. Disordered regions lie at residues Gly-525–Gly-937, Gly-950–Ser-1258, Met-1309–Ser-1553, and Arg-1573–Gly-1625. Residues Ala-528–Gly-541 show a composition bias toward pro residues. A run of 5 repeats spans residues Lys-570–Thr-576, Lys-577–Thr-583, Lys-584–Thr-590, Lys-591–Thr-597, and Lys-598–Lys-604. A 5 X 7 AA tandem repeats of K-A-S-P-Q-[AT]-[AT] region spans residues Lys-570–Lys-604. Residues Pro-573 to Ser-600 are compositionally biased toward polar residues. The segment covering Val-632–Thr-645 has biased composition (pro residues). Polar residues predominate over residues Gln-684–Leu-693. Positions Ser-694–Ser-708 are enriched in low complexity. Residues Glu-709–Val-718 show a composition bias toward polar residues. Composition is skewed to acidic residues over residues Phe-787–Ser-802 and Ser-865–Thr-876. Position 881 is an omega-N-methylarginine (Arg-881). The span at Pro-895–Arg-905 shows a compositional bias: basic and acidic residues. The residue at position 980 (Ser-980) is a Phosphoserine. Residues Pro-994–Ser-1011 show a composition bias toward low complexity. Acidic residues predominate over residues Asp-1049–Leu-1062. 2 positions are modified to phosphoserine: Ser-1050 and Ser-1051. Positions Leu-1063–Arg-1076 are enriched in basic and acidic residues. Ser-1100 is modified (phosphoserine). Thr-1102 is subject to Phosphothreonine. Residues Ser-1108 and Ser-1114 each carry the phosphoserine modification. Residues Glu-1117–Ser-1132 are compositionally biased toward basic and acidic residues. Low complexity-rich tracts occupy residues Cys-1133–Asp-1143 and Ser-1173–Pro-1190. Residues Lys-1192–Met-1207 are compositionally biased toward basic and acidic residues. Residues Gln-1209–Arg-1219 show a composition bias toward low complexity. The segment covering Ser-1226–Gln-1240 has biased composition (polar residues). Residue Ser-1236 is modified to Phosphoserine. Residues Ser-1333–Ser-1343 are compositionally biased toward low complexity. Thr-1354 is a glycosylation site (O-linked (GlcNAc) threonine). The span at Phe-1357–Lys-1366 shows a compositional bias: basic and acidic residues. The segment covering Ser-1370–Glu-1438 has biased composition (polar residues). An O-linked (GlcNAc) threonine glycan is attached at Thr-1395. Ser-1482, Ser-1491, and Ser-1493 each carry phosphoserine. The segment covering Ser-1488–Pro-1498 has biased composition (low complexity). Composition is skewed to polar residues over residues Glu-1508–Ile-1522 and Arg-1573–Pro-1609. The O-linked (GlcNAc) serine glycan is linked to Ser-1707. An omega-N-methylarginine mark is found at Arg-1792 and Arg-1796. Arg-1806 carries the post-translational modification Asymmetric dimethylarginine; alternate. The residue at position 1806 (Arg-1806) is an Omega-N-methylarginine; alternate. Omega-N-methylarginine is present on Arg-1818. Disordered stretches follow at residues Gly-1831–Pro-1865 and Pro-1926–Tyr-1977. Positions Ala-1844–Ser-1856 are enriched in basic and acidic residues. A glycan (O-linked (GlcNAc) threonine) is linked at Thr-1934. 2 positions are modified to phosphoserine: Ser-1990 and Ser-2046. Omega-N-methylarginine is present on residues Arg-2051 and Arg-2081. Residues Arg-2255, Arg-2265, and Arg-2270 each carry the asymmetric dimethylarginine modification. Thr-2318 is a glycosylation site (O-linked (GlcNAc) threonine). Disordered regions lie at residues Pro-2327–Glu-2378, Glu-2476–Ala-2504, and Thr-2524–Ala-2663. The segment covering Ala-2329–Gln-2342 has biased composition (pro residues). Basic and acidic residues predominate over residues Ala-2361–Glu-2378. 2 coiled-coil regions span residues Glu-2366–Arg-2422 and Leu-2453–Ala-2483. Thr-2524 is a glycosylation site (O-linked (GlcNAc) threonine). Positions Ser-2541 to Glu-2551 are enriched in polar residues. Ser-2578 carries the phosphoserine modification. A phosphothreonine mark is found at Thr-2595 and Thr-2622. The segment covering Arg-2643–Ala-2655 has biased composition (basic and acidic residues). O-linked (GlcNAc) threonine glycosylation is present at Thr-2700. Residues Glu-2730 to Asp-3278 form an interaction with DAO region. Ser-2811, Ser-2860, and Ser-2866 each carry phosphoserine. The interval Thr-2854–Lys-2874 is disordered. The O-linked (GlcNAc) threonine glycan is linked to Thr-2945. Residue Ser-3022 is modified to Phosphoserine. 3 disordered regions span residues Pro-3051–Arg-3409, Tyr-3431–His-3560, and Glu-3581–Pro-3917. Residues Thr-3073–Gly-3083 show a composition bias toward polar residues. Low complexity predominate over residues Ala-3089–Gly-3114. Residues Lys-3202–Asp-3211 show a composition bias toward basic and acidic residues. Over residues Arg-3212–Pro-3237 the composition is skewed to polar residues. Position 3301 is a phosphoserine (Ser-3301). 2 stretches are compositionally biased toward basic and acidic residues: residues Gly-3330 to Lys-3342 and Gln-3372 to Glu-3391. A Phosphoserine modification is found at Ser-3382. Positions Tyr-3447–Gly-3461 are enriched in low complexity. The segment covering Leu-3464–Gln-3487 has biased composition (basic and acidic residues). Arg-3502 bears the Omega-N-methylarginine mark. A compositionally biased stretch (low complexity) spans Pro-3520–Gly-3534. Basic and acidic residues-rich tracts occupy residues Val-3549–His-3560 and Trp-3592–Asp-3602. Residues Glu-3652 to Arg-3665 are compositionally biased toward basic residues. The segment covering His-3666 to Pro-3690 has biased composition (basic and acidic residues). The segment covering Thr-3750–Pro-3820 has biased composition (low complexity). An Omega-N-methylarginine modification is found at Arg-3823. Over residues Lys-3835–Pro-3851 the composition is skewed to pro residues. Residues Gln-3856–Ala-3891 are compositionally biased toward low complexity.

In terms of assembly, interacts with PCLO, ERC2/CAST1, RIMS1 and UNC13A. Interacts with TPRG1L. Interacts with DYNLL1 and DYNLL2; these interactions potentially link PTVs to dynein and myosin V motor complexes. Interacts with ATG5; this interaction is important for the regulation of presynaptic autophagy. Interacts (via C-terminus) with TRIO (via N-terminus). Interacts with CTBP1. Interacts with SIAH1; this interaction negatively regulates SIAH1 E3 ligase activity. Interacts (via coiled region) with DAO; the interaction is direct. Post-translationally, myristoylated. The N-terminal myristoylation is not sufficient for presynaptic localization. As to expression, expressed in brain and retina.

It localises to the cytoplasm. The protein localises to the presynaptic active zone. It is found in the cytoskeleton. Its subcellular location is the cytoplasmic vesicle. The protein resides in the secretory vesicle. It localises to the synaptic vesicle membrane. Functionally, scaffold protein of the presynaptic cytomatrix at the active zone (CAZ) which is the place in the synapse where neurotransmitter is released. After synthesis, participates in the formation of Golgi-derived membranous organelles termed Piccolo-Bassoon transport vesicles (PTVs) that are transported along axons to sites of nascent synaptic contacts. At the presynaptic active zone, regulates the spatial organization of synaptic vesicle cluster, the protein complexes that execute membrane fusion and compensatory endocytosis. Also functions in processes other than assembly such as the regulation of specific presynaptic protein ubiquitination by interacting with SIAH1 or the regulation of presynaptic autophagy by associating with ATG5. Also mediates synapse to nucleus communication leading to reconfiguration of gene expression by associating with the transcriptional corepressor CTBP1 and by subsequently reducing the size of its pool available for nuclear import. Inhibits the activity of the proportion of DAO enzyme that localizes to the presynaptic active zone, which may modulate synaptic transmission. In Mus musculus (Mouse), this protein is Protein bassoon.